Reading from the N-terminus, the 184-residue chain is Protein Syd (184 aa).

This sequence belongs to the Syd family.

It is found in the cell inner membrane. Functionally, interacts with the SecY protein in vivo. May bind preferentially to an uncomplexed state of SecY, thus functioning either as a chelating agent for excess SecY in the cell or as a regulatory factor that negatively controls the translocase function. The sequence is that of Protein Syd from Photorhabdus laumondii subsp. laumondii (strain DSM 15139 / CIP 105565 / TT01) (Photorhabdus luminescens subsp. laumondii).